A 301-amino-acid chain; its full sequence is Leucine-rich repeat-containing protein 30 (301 aa).

LRR repeat units follow at residues 72-93 (EVQK…VGKL), 95-116 (RIVV…VSLL), 118-139 (CLKV…LSLC), 141-163 (KLEV…ADLS), 164-185 (RLRK…VFSL), 187-208 (ELIF…IQHL), 210-231 (SLQI…LCLV), 233-254 (SLEL…LHLL), and 265-287 (MDKG…VEGG).

In Homo sapiens (Human), this protein is Leucine-rich repeat-containing protein 30 (LRRC30).